The sequence spans 337 residues: Ferredoxin--NADP reductase (337 aa).

FAD is bound by residues E42, Q50, Y55, V97, F130, D292, and T333.

The protein belongs to the ferredoxin--NADP reductase type 2 family. As to quaternary structure, homodimer. The cofactor is FAD.

It catalyses the reaction 2 reduced [2Fe-2S]-[ferredoxin] + NADP(+) + H(+) = 2 oxidized [2Fe-2S]-[ferredoxin] + NADPH. The sequence is that of Ferredoxin--NADP reductase from Streptococcus mutans serotype c (strain ATCC 700610 / UA159).